Here is a 485-residue protein sequence, read N- to C-terminus: Malonate-semialdehyde dehydrogenase (485 aa).

Phenylalanine 155, lysine 179, glutamate 182, arginine 183, and serine 232 together coordinate NAD(+). Catalysis depends on cysteine 287, which acts as the Nucleophile. Position 386 (glutamate 386) interacts with NAD(+).

This sequence belongs to the aldehyde dehydrogenase family. IolA subfamily. In terms of assembly, homotetramer.

The enzyme catalyses 3-oxopropanoate + NAD(+) + CoA + H2O = hydrogencarbonate + acetyl-CoA + NADH + H(+). It catalyses the reaction 2-methyl-3-oxopropanoate + NAD(+) + CoA + H2O = propanoyl-CoA + hydrogencarbonate + NADH + H(+). The protein operates within polyol metabolism; myo-inositol degradation into acetyl-CoA; acetyl-CoA from myo-inositol: step 7/7. Catalyzes the oxidation of malonate semialdehyde (MSA) and methylmalonate semialdehyde (MMSA) into acetyl-CoA and propanoyl-CoA, respectively. Is involved in a myo-inositol catabolic pathway. Bicarbonate, and not CO2, is the end-product of the enzymatic reaction. The polypeptide is Malonate-semialdehyde dehydrogenase (Halalkalibacterium halodurans (strain ATCC BAA-125 / DSM 18197 / FERM 7344 / JCM 9153 / C-125) (Bacillus halodurans)).